Here is a 270-residue protein sequence, read N- to C-terminus: Formamidopyrimidine-DNA glycosylase (270 aa).

The Schiff-base intermediate with DNA role is filled by P2. Residue E3 is the Proton donor of the active site. K58 functions as the Proton donor; for beta-elimination activity in the catalytic mechanism. DNA contacts are provided by H91, R110, and R151. The segment at 236–270 adopts an FPG-type zinc-finger fold; the sequence is FAYGRAGEFCKVCGTTLREVKLGQRASVYCPRCQR. R260 functions as the Proton donor; for delta-elimination activity in the catalytic mechanism.

The protein belongs to the FPG family. As to quaternary structure, monomer. It depends on Zn(2+) as a cofactor.

It catalyses the reaction Hydrolysis of DNA containing ring-opened 7-methylguanine residues, releasing 2,6-diamino-4-hydroxy-5-(N-methyl)formamidopyrimidine.. It carries out the reaction 2'-deoxyribonucleotide-(2'-deoxyribose 5'-phosphate)-2'-deoxyribonucleotide-DNA = a 3'-end 2'-deoxyribonucleotide-(2,3-dehydro-2,3-deoxyribose 5'-phosphate)-DNA + a 5'-end 5'-phospho-2'-deoxyribonucleoside-DNA + H(+). Its function is as follows. Involved in base excision repair of DNA damaged by oxidation or by mutagenic agents. Acts as a DNA glycosylase that recognizes and removes damaged bases. Has a preference for oxidized purines, such as 7,8-dihydro-8-oxoguanine (8-oxoG). Has AP (apurinic/apyrimidinic) lyase activity and introduces nicks in the DNA strand. Cleaves the DNA backbone by beta-delta elimination to generate a single-strand break at the site of the removed base with both 3'- and 5'-phosphates. The chain is Formamidopyrimidine-DNA glycosylase from Ectopseudomonas mendocina (strain ymp) (Pseudomonas mendocina).